Here is a 590-residue protein sequence, read N- to C-terminus: Protein NRT1/ PTR FAMILY 8.5 (590 aa).

Residues Ala-96 to Ile-116 form a helical membrane-spanning segment. Thr-126 is modified (phosphothreonine). The next 10 membrane-spanning stretches (helical) occupy residues Phe-130–Leu-150, Thr-168–Ile-188, Phe-214–Val-234, Trp-242–Ile-262, Phe-365–Phe-385, Ile-401–Tyr-421, Met-445–Val-465, Ile-478–Gly-498, Ala-524–Gly-544, and Phe-562–Val-582.

It belongs to the major facilitator superfamily. Proton-dependent oligopeptide transporter (POT/PTR) (TC 2.A.17) family. As to expression, expressed in shoots, roots, stems, leaves, flowers and siliques.

Its subcellular location is the membrane. This Arabidopsis thaliana (Mouse-ear cress) protein is Protein NRT1/ PTR FAMILY 8.5 (NPF8.5).